The following is a 140-amino-acid chain: Large ribosomal subunit protein uL11 (140 aa).

It belongs to the universal ribosomal protein uL11 family. In terms of assembly, part of the ribosomal stalk of the 50S ribosomal subunit. Interacts with L10 and the large rRNA to form the base of the stalk. L10 forms an elongated spine to which L12 dimers bind in a sequential fashion forming a multimeric L10(L12)X complex. One or more lysine residues are methylated.

In terms of biological role, forms part of the ribosomal stalk which helps the ribosome interact with GTP-bound translation factors. The chain is Large ribosomal subunit protein uL11 from Gemmatimonas aurantiaca (strain DSM 14586 / JCM 11422 / NBRC 100505 / T-27).